The following is a 261-amino-acid chain: MEMO1 family protein AF_2310 (261 aa).

This sequence belongs to the MEMO1 family.

This chain is MEMO1 family protein AF_2310, found in Archaeoglobus fulgidus (strain ATCC 49558 / DSM 4304 / JCM 9628 / NBRC 100126 / VC-16).